Consider the following 94-residue polypeptide: uncharacterized protein (94 aa).

Over residues isoleucine 33–proline 42 the composition is skewed to polar residues. Residues isoleucine 33 to valine 57 are disordered. Over residues asparagine 43–valine 57 the composition is skewed to low complexity.

This is an uncharacterized protein from Dictyostelium discoideum (Social amoeba).